Reading from the N-terminus, the 424-residue chain is Tyrosine--tRNA ligase (424 aa).

Y37 lines the L-tyrosine pocket. Positions P42–H51 match the 'HIGH' region motif. Residues Y175 and Q179 each coordinate L-tyrosine. The 'KMSKS' region motif lies at K235–T239. K238 lines the ATP pocket. Positions A357 to G414 constitute an S4 RNA-binding domain.

Belongs to the class-I aminoacyl-tRNA synthetase family. TyrS type 1 subfamily. Homodimer.

The protein localises to the cytoplasm. It catalyses the reaction tRNA(Tyr) + L-tyrosine + ATP = L-tyrosyl-tRNA(Tyr) + AMP + diphosphate + H(+). Functionally, catalyzes the attachment of tyrosine to tRNA(Tyr) in a two-step reaction: tyrosine is first activated by ATP to form Tyr-AMP and then transferred to the acceptor end of tRNA(Tyr). The sequence is that of Tyrosine--tRNA ligase from Sodalis glossinidius (strain morsitans).